The sequence spans 226 residues: Probable proteasome subunit beta type-1 (226 aa).

The propeptide at 1–24 (MATTVKDTMNVDINAIKKGEIRMG) is removed in mature form. The active-site Nucleophile is T25.

The protein belongs to the peptidase T1B family. As to quaternary structure, the 26S proteasome consists of a 20S proteasome core and two 19S regulatory subunits. The 20S proteasome core is composed of 28 subunits that are arranged in four stacked rings, resulting in a barrel-shaped structure. The two end rings are each formed by seven alpha subunits, and the two central rings are each formed by seven beta subunits. The catalytic chamber with the active sites is on the inside of the barrel.

Its subcellular location is the cytoplasm. It is found in the nucleus. The enzyme catalyses Cleavage of peptide bonds with very broad specificity.. In terms of biological role, the proteasome is a multicatalytic proteinase complex which is characterized by its ability to cleave peptides with Arg, Phe, Tyr, Leu, and Glu adjacent to the leaving group at neutral or slightly basic pH. The proteasome has an ATP-dependent proteolytic activity. The polypeptide is Probable proteasome subunit beta type-1 (pre3) (Schizosaccharomyces pombe (strain 972 / ATCC 24843) (Fission yeast)).